Consider the following 494-residue polypeptide: Splicing regulatory glutamine/lysine-rich protein 1 (494 aa).

An RRM domain is found at 69–145; it reads RTVYVGNLNS…RPLKINHSNN (77 aa). A phosphoserine mark is found at Ser174 and Ser187. The interval 176 to 494 is disordered; it reads ISAAIEPESG…ERLCSTADAV (319 aa). Over residues 183 to 192 the composition is skewed to basic and acidic residues; that stretch reads ESGKSNERKG. Basic residues-rich tracts occupy residues 193–230 and 238–262; these read GRSR…RSRS and SKSP…RSRD. Basic and acidic residues predominate over residues 263–340; it reads KRKDTREKVK…DRSKEADEKR (78 aa). Phosphothreonine is present on Thr348. A compositionally biased stretch (basic residues) spans 357-373; that stretch reads RRSRSASRERRRRRSRS. 2 stretches are compositionally biased toward basic and acidic residues: residues 404-453 and 463-474; these read REKE…KEAD and KDTARTEEESKA.

The protein belongs to the splicing factor SR family. As to quaternary structure, interacts with SREK1IP1. Homodimer. Binds SFRS1, SFRS2, SFRS3 and SFRS6. Interacts with the spliceosome. As to expression, ubiquitous. Detected in liver, brain, lung, spleen, testis and pancreas.

It is found in the nucleus. In terms of biological role, participates in the regulation of alternative splicing by modulating the activity of other splice facors. Inhibits the splicing activity of SFRS1, SFRS2 and SFRS6. Augments the splicing activity of SFRS3. In Rattus norvegicus (Rat), this protein is Splicing regulatory glutamine/lysine-rich protein 1 (Srek1).